Here is a 219-residue protein sequence, read N- to C-terminus: Uridylate kinase (219 aa).

Position 9 to 10 (9 to 10) interacts with ATP; that stretch reads GS. Gly-41 contacts UMP. The ATP site is built by Gly-42 and Arg-46. UMP-binding positions include Asp-63 and 110 to 116; that span reads TFPGHTT. 4 residues coordinate ATP: Thr-136, Asn-137, Tyr-142, and Asp-145.

Belongs to the UMP kinase family. Homohexamer.

The protein localises to the cytoplasm. The enzyme catalyses UMP + ATP = UDP + ADP. It participates in pyrimidine metabolism; CTP biosynthesis via de novo pathway; UDP from UMP (UMPK route): step 1/1. With respect to regulation, inhibited by UTP. In terms of biological role, catalyzes the reversible phosphorylation of UMP to UDP. The chain is Uridylate kinase from Archaeoglobus fulgidus (strain ATCC 49558 / DSM 4304 / JCM 9628 / NBRC 100126 / VC-16).